Reading from the N-terminus, the 243-residue chain is CR(VI) reductase (243 aa).

Belongs to the flavin oxidoreductase frp family. FMN serves as cofactor.

The chain is CR(VI) reductase (chrR) from Pseudomonas sp. (strain G-1).